The sequence spans 418 residues: UDP-N-acetylglucosamine 1-carboxyvinyltransferase (418 aa).

Phosphoenolpyruvate is bound at residue 22–23; the sequence is KN. Position 91 (R91) interacts with UDP-N-acetyl-alpha-D-glucosamine. C115 acts as the Proton donor in catalysis. C115 carries the post-translational modification 2-(S-cysteinyl)pyruvic acid O-phosphothioketal. Residues D305 and I327 each coordinate UDP-N-acetyl-alpha-D-glucosamine.

The protein belongs to the EPSP synthase family. MurA subfamily.

The protein localises to the cytoplasm. It carries out the reaction phosphoenolpyruvate + UDP-N-acetyl-alpha-D-glucosamine = UDP-N-acetyl-3-O-(1-carboxyvinyl)-alpha-D-glucosamine + phosphate. It functions in the pathway cell wall biogenesis; peptidoglycan biosynthesis. Cell wall formation. Adds enolpyruvyl to UDP-N-acetylglucosamine. In Aeromonas salmonicida (strain A449), this protein is UDP-N-acetylglucosamine 1-carboxyvinyltransferase.